We begin with the raw amino-acid sequence, 245 residues long: tRNA pseudouridine synthase A (245 aa).

Catalysis depends on D52, which acts as the Nucleophile. Substrate is bound at residue Y111.

The protein belongs to the tRNA pseudouridine synthase TruA family. In terms of assembly, homodimer.

It carries out the reaction uridine(38/39/40) in tRNA = pseudouridine(38/39/40) in tRNA. Formation of pseudouridine at positions 38, 39 and 40 in the anticodon stem and loop of transfer RNAs. This Rickettsia africae (strain ESF-5) protein is tRNA pseudouridine synthase A.